Here is a 285-residue protein sequence, read N- to C-terminus: Ribonuclease H1 (285 aa).

The tract at residues 72–126 (RSSSSPDGSKGQESAHEQKSQAKTSKRPREPLGEGEELPEPGPKHTRQDTEPAAV) is disordered. One can recognise an RNase H type-1 domain in the interval 135-281 (MGESVIVYTD…ADRLAREGAK (147 aa)). Mg(2+) is bound by residues D144, E185, D209, and D273.

Belongs to the RNase H family. In terms of assembly, monomer. Mg(2+) is required as a cofactor.

It is found in the cytoplasm. It catalyses the reaction Endonucleolytic cleavage to 5'-phosphomonoester.. Its activity is regulated as follows. In the presence of magnesium, manganese is inhibitory. Functionally, endonuclease that specifically degrades the RNA of RNA-DNA hybrids. Plays a role in RNA polymerase II (RNAp II) transcription termination by degrading R-loop RNA-DNA hybrid formation at G-rich pause sites located downstream of the poly(A) site and behind the elongating RNAp II. The protein is Ribonuclease H1 (Rnaseh1) of Mus musculus (Mouse).